A 219-amino-acid chain; its full sequence is Peroxiredoxin-5, mitochondrial (219 aa).

The transit peptide at 1 to 57 (MRLGWLRVLGCRPGSVVSRATIVEGASTTAAGTRGCLEGILEWTFGGVRGFRSAAVA) directs the protein to the mitochondrion. Residues 61 to 219 (IKVGDAIPSV…SLAPNILSQL (159 aa)) enclose the Thioredoxin domain. Lys-80 bears the N6-acetyllysine mark. Residue Lys-88 is modified to N6-acetyllysine; alternate. Lys-88 bears the N6-succinyllysine; alternate mark. The active-site Cysteine sulfenic acid (-SOH) intermediate is the Cys-105. Cys-105 carries S-palmitoyl cysteine lipidation. Cys-105 and Cys-209 form a disulfide bridge. Lys-121 is modified (N6-succinyllysine). A Phosphoserine modification is found at Ser-187. A Microbody targeting signal motif is present at residues 217–219 (SQL).

The protein belongs to the peroxiredoxin family. Prx5 subfamily. In terms of assembly, monomer. In terms of processing, S-palmitoylated. Palmitoylation occurs on the active site, inhibiting its reactivity; therefore PRDX5 palmitoylation status determines its antioxidant capacity. Post-translationally, S-palmitoylated. Depalmitoylated by ABHD10.

Its subcellular location is the mitochondrion. It localises to the cytoplasm. The protein resides in the peroxisome matrix. It catalyses the reaction a hydroperoxide + [thioredoxin]-dithiol = an alcohol + [thioredoxin]-disulfide + H2O. Thiol-specific peroxidase that catalyzes the reduction of hydrogen peroxide and organic hydroperoxides to water and alcohols, respectively. Plays a role in cell protection against oxidative stress by detoxifying peroxides and as sensor of hydrogen peroxide-mediated signaling events. In Bos taurus (Bovine), this protein is Peroxiredoxin-5, mitochondrial (PRDX5).